The primary structure comprises 481 residues: Adenosylhomocysteinase (481 aa).

Threonine 65, aspartate 140, and glutamate 200 together coordinate substrate. 201-203 is a binding site for NAD(+); it reads TTT. Lysine 230 and aspartate 234 together coordinate substrate. NAD(+) is bound by residues asparagine 235, 264 to 269, glutamate 287, asparagine 322, 343 to 345, and asparagine 393; these read GYGDVG and IGH.

This sequence belongs to the adenosylhomocysteinase family. Requires NAD(+) as cofactor.

The protein localises to the cytoplasm. It carries out the reaction S-adenosyl-L-homocysteine + H2O = L-homocysteine + adenosine. It participates in amino-acid biosynthesis; L-homocysteine biosynthesis; L-homocysteine from S-adenosyl-L-homocysteine: step 1/1. Functionally, may play a key role in the regulation of the intracellular concentration of adenosylhomocysteine. This chain is Adenosylhomocysteinase, found in Polynucleobacter asymbioticus (strain DSM 18221 / CIP 109841 / QLW-P1DMWA-1) (Polynucleobacter necessarius subsp. asymbioticus).